Consider the following 336-residue polypeptide: Holliday junction branch migration complex subunit RuvB (336 aa).

The segment at alanine 4–tyrosine 184 is large ATPase domain (RuvB-L). ATP contacts are provided by residues isoleucine 23, arginine 24, glycine 65, lysine 68, threonine 69, threonine 70, glutamate 131–tyrosine 133, arginine 174, tyrosine 184, and arginine 221. Mg(2+) is bound at residue threonine 69. The interval glutamine 185–asparagine 255 is small ATPAse domain (RuvB-S). A head domain (RuvB-H) region spans residues alanine 258 to proline 336. Positions 294, 313, and 318 each coordinate DNA.

This sequence belongs to the RuvB family. As to quaternary structure, homohexamer. Forms an RuvA(8)-RuvB(12)-Holliday junction (HJ) complex. HJ DNA is sandwiched between 2 RuvA tetramers; dsDNA enters through RuvA and exits via RuvB. An RuvB hexamer assembles on each DNA strand where it exits the tetramer. Each RuvB hexamer is contacted by two RuvA subunits (via domain III) on 2 adjacent RuvB subunits; this complex drives branch migration. In the full resolvosome a probable DNA-RuvA(4)-RuvB(12)-RuvC(2) complex forms which resolves the HJ.

The protein resides in the cytoplasm. The catalysed reaction is ATP + H2O = ADP + phosphate + H(+). In terms of biological role, the RuvA-RuvB-RuvC complex processes Holliday junction (HJ) DNA during genetic recombination and DNA repair, while the RuvA-RuvB complex plays an important role in the rescue of blocked DNA replication forks via replication fork reversal (RFR). RuvA specifically binds to HJ cruciform DNA, conferring on it an open structure. The RuvB hexamer acts as an ATP-dependent pump, pulling dsDNA into and through the RuvAB complex. RuvB forms 2 homohexamers on either side of HJ DNA bound by 1 or 2 RuvA tetramers; 4 subunits per hexamer contact DNA at a time. Coordinated motions by a converter formed by DNA-disengaged RuvB subunits stimulates ATP hydrolysis and nucleotide exchange. Immobilization of the converter enables RuvB to convert the ATP-contained energy into a lever motion, pulling 2 nucleotides of DNA out of the RuvA tetramer per ATP hydrolyzed, thus driving DNA branch migration. The RuvB motors rotate together with the DNA substrate, which together with the progressing nucleotide cycle form the mechanistic basis for DNA recombination by continuous HJ branch migration. Branch migration allows RuvC to scan DNA until it finds its consensus sequence, where it cleaves and resolves cruciform DNA. This is Holliday junction branch migration complex subunit RuvB from Salmonella arizonae (strain ATCC BAA-731 / CDC346-86 / RSK2980).